Reading from the N-terminus, the 480-residue chain is V-type ATP synthase beta chain 2 (480 aa).

This sequence belongs to the ATPase alpha/beta chains family.

Its function is as follows. Produces ATP from ADP in the presence of a proton gradient across the membrane. The V-type beta chain is a regulatory subunit. This is V-type ATP synthase beta chain 2 (atpB2) from Treponema pallidum (strain Nichols).